The primary structure comprises 263 residues: HTH-type transcriptional repressor NanR (263 aa).

Positions 1 to 24 are disordered; that stretch reads MSPMNAFDSQTEDSSPAIGRNLRS. An HTH gntR-type domain is found at 30-98; it reads KKLSEMVEEE…NGERARVSRP (69 aa). The segment at residues 58 to 77 is a DNA-binding region (H-T-H motif); the sequence is ERELMAFFNVGRPSVREALA.

This sequence belongs to the NanR family.

Transcriptional repressor that controls expression of the genes required for the catabolism of sialic acids. This chain is HTH-type transcriptional repressor NanR, found in Escherichia coli O127:H6 (strain E2348/69 / EPEC).